A 44-amino-acid polypeptide reads, in one-letter code: uncharacterized protein (44 aa).

This is an uncharacterized protein from Vaccinia virus (strain Western Reserve) (VACV).